The following is a 120-amino-acid chain: uncharacterized protein (120 aa).

The PRD domain maps to 13-119; it reads VIDKDICKGM…YGLWMAANEE (107 aa).

This is an uncharacterized protein from Escherichia coli (strain K12).